We begin with the raw amino-acid sequence, 309 residues long: Dihydroorotate dehydrogenase B (NAD(+)), catalytic subunit (309 aa).

FMN is bound by residues S21 and 45-46; that span reads KA. Substrate is bound by residues K45 and 69–73; that span reads NAIGL. N99 and N127 together coordinate FMN. N127 serves as a coordination point for substrate. Catalysis depends on C130, which acts as the Nucleophile. FMN is bound by residues K165 and I191. Position 192 to 193 (192 to 193) interacts with substrate; that stretch reads NT. Residues G217, 243-244, and 265-266 contribute to the FMN site; these read GG and GT.

This sequence belongs to the dihydroorotate dehydrogenase family. Type 1 subfamily. In terms of assembly, heterotetramer of 2 PyrK and 2 PyrD type B subunits. FMN serves as cofactor.

It is found in the cytoplasm. It catalyses the reaction (S)-dihydroorotate + NAD(+) = orotate + NADH + H(+). It functions in the pathway pyrimidine metabolism; UMP biosynthesis via de novo pathway; orotate from (S)-dihydroorotate (NAD(+) route): step 1/1. Catalyzes the conversion of dihydroorotate to orotate with NAD(+) as electron acceptor. The polypeptide is Dihydroorotate dehydrogenase B (NAD(+)), catalytic subunit (pyrD) (Exiguobacterium sibiricum (strain DSM 17290 / CCUG 55495 / CIP 109462 / JCM 13490 / 255-15)).